The following is a 378-amino-acid chain: Ribosomal RNA large subunit methyltransferase G (378 aa).

Belongs to the methyltransferase superfamily. RlmG family.

The protein resides in the cytoplasm. The catalysed reaction is guanosine(1835) in 23S rRNA + S-adenosyl-L-methionine = N(2)-methylguanosine(1835) in 23S rRNA + S-adenosyl-L-homocysteine + H(+). Specifically methylates the guanine in position 1835 (m2G1835) of 23S rRNA. This chain is Ribosomal RNA large subunit methyltransferase G, found in Escherichia coli O157:H7.